Consider the following 718-residue polypeptide: Sodium/myo-inositol cotransporter (718 aa).

The Extracellular portion of the chain corresponds to 1–9 (MRAVLETAD). Residues 10–29 (IAIVALYFILVMCIGFFAMW) traverse the membrane as a helical segment. Topologically, residues 30 to 38 (KSNRSTVSG) are cytoplasmic. Residues 39 to 57 (YFLAGRSMTWVAIGASLFV) form a helical membrane-spanning segment. The Extracellular portion of the chain corresponds to 58 to 86 (SNIGSEHFIGLAGSGAASGFAVGAWEFNA). The chain crosses the membrane as a helical span at residues 87-110 (LLLLQLLGWVFIPIYIRSGVYTMP). Residues 111 to 123 (EYLSKRFGGHRIQ) are Cytoplasmic-facing. A helical transmembrane segment spans residues 124–144 (VYFAALSLILYIFTKLSVDLY). The Extracellular segment spans residues 145-157 (SGALFIQESLGWN). A helical membrane pass occupies residues 158-183 (LYVSVILLIGMTALLTVTGGLVAVIY). Topologically, residues 184–186 (TDT) are cytoplasmic. Residues 187–205 (LQALLMIVGALTLMIISMM) traverse the membrane as a helical segment. Topologically, residues 206–303 (EIGGFEEVKR…HAKGSTLMAG (98 aa)) are extracellular. The N-linked (GlcNAc...) asparagine glycan is linked to N232. A helical membrane pass occupies residues 304 to 324 (FLKLLPMFIIVVPGMISRILF). At 325–353 (ADDIACINPEHCMQVCGSRAGCSNIAYPR) the chain is on the cytoplasmic side. A helical transmembrane segment spans residues 354 to 376 (LVMKLVPVGLRGLMMAVMIAALM). Over 377–406 (SDLDSIFNSASTIFTLDVYKLIRRSASSRE) the chain is Extracellular. The helical transmembrane segment at 407–430 (LMIVGRIFVAFMVVISIAWVPIIV) threads the bilayer. Residues 431 to 443 (EMQGGQMYLYIQE) are Cytoplasmic-facing. A helical membrane pass occupies residues 444–462 (VADYLTPPVAALFLLAIFW). Residues 463-510 (KRCNEQGAFYGGMAGFVLGAVRLTLAFAYRAPECDQPDNRPGFIKDIH) lie on the Extracellular side of the membrane. A helical transmembrane segment spans residues 511–532 (YMYVATALFWVTGLITVIVSLL). Topologically, residues 533 to 695 (TPPPTKEQIR…QMLEEPPQVK (163 aa)) are cytoplasmic. A phosphoserine mark is found at S594 and S632. A helical transmembrane segment spans residues 696-716 (LILNIGLFAVCSLGIFMFVYF). Residues 717 to 718 (SL) lie on the Extracellular side of the membrane.

It belongs to the sodium:solute symporter (SSF) (TC 2.A.21) family. As to quaternary structure, interacts with KCNQ2 (via the pore module). Interacts with KCNQ1; this interaction is direct. Forms coregulatory complexes with ion channels KCNQ2-KCNQ3 and KCNQ1-KCNE2. As to expression, kidney cortex and medulla.

The protein resides in the apical cell membrane. Its subcellular location is the basolateral cell membrane. The catalysed reaction is myo-inositol(out) + 2 Na(+)(out) = myo-inositol(in) + 2 Na(+)(in). It carries out the reaction scyllo-inositol(out) + 2 Na(+)(out) = scyllo-inositol(in) + 2 Na(+)(in). Its activity is regulated as follows. Inhibited by phlorizin and phloretin. In terms of biological role, electrogenic Na(+)-coupled sugar symporter that actively transports myo-inositol and its stereoisomer scyllo-inositol across the plasma membrane, with a Na(+) to sugar coupling ratio of 2:1. Maintains myo-inositol concentration gradient that defines cell volume and fluid balance during osmotic stress, in particular in the fetoplacental unit and central nervous system. Forms coregulatory complexes with voltage-gated K(+) ion channels, allosterically altering ion selectivity, voltage dependence and gating kinetics of the channel. In turn, K(+) efflux through the channel forms a local electrical gradient that modulates electrogenic Na(+)-coupled myo-inositol influx through the transporter. Associates with KCNQ1-KCNE2 channel in the apical membrane of choroid plexus epithelium and regulates the myo-inositol gradient between blood and cerebrospinal fluid with an impact on neuron excitability. Associates with KCNQ2-KCNQ3 channel altering ion selectivity, increasing Na(+) and Cs(+) permeation relative to K(+) permeation. Provides myo-inositol precursor for biosynthesis of phosphoinositides such as PI(4,5)P2, thus indirectly affecting the activity of phosphoinositide-dependent ion channels and Ca(2+) signaling upon osmotic stress. Has very low affinity for sugars such as L-fucose and L-xylose, with an affinity about three orders of magnitude lower than myo-inositol. The polypeptide is Sodium/myo-inositol cotransporter (SLC5A3) (Canis lupus familiaris (Dog)).